We begin with the raw amino-acid sequence, 25 residues long: Caerin-2.5 (25 aa).

In terms of tissue distribution, expressed by the skin parotoid and/or rostral glands.

It is found in the secreted. In terms of biological role, antibacterial peptide, that adopts an alpha helical conformation which can disrupt bacterial membranes. Each caerin displays a different antimicrobial specificity. This is Caerin-2.5 from Ranoidea gilleni (Centralian tree frog).